The primary structure comprises 736 residues: Cytosolic neutral trehalase (736 aa).

The segment at 1–47 is disordered; that stretch reads MSEAPQARRVGSVDDHSVYDDAKTYYTSEERHNNSRSGPRQRTYSQN. The span at 11-33 shows a compositional bias: basic and acidic residues; the sequence is GSVDDHSVYDDAKTYYTSEERHN. The segment covering 35–47 has biased composition (polar residues); sequence SRSGPRQRTYSQN. D92, D94, N96, Q98, and D103 together coordinate Ca(2+). Substrate is bound by residues R279, 286 to 287, N323, 332 to 334, E399, R448, and G451; these read WD and RSQ. Residues D453 and E657 each act as proton donor/acceptor in the active site.

The protein belongs to the glycosyl hydrolase 37 family. It depends on Ca(2+) as a cofactor.

It is found in the cytoplasm. It carries out the reaction alpha,alpha-trehalose + H2O = alpha-D-glucose + beta-D-glucose. It participates in carbohydrate degradation. Hydrolyzes intracellular trehalose to glucose. Plays a role in pathogenicity, specifically in proliferation of invasive hyphae in rice blast disease. This chain is Cytosolic neutral trehalase (NTH1), found in Pyricularia oryzae (strain 70-15 / ATCC MYA-4617 / FGSC 8958) (Rice blast fungus).